Reading from the N-terminus, the 607-residue chain is UvrABC system protein C (607 aa).

Residues 16 to 94 enclose the GIY-YIG domain; it reads GRPGVYRMFD…IKEWRPPYNI (79 aa). The UVR domain maps to 203 to 238; the sequence is NALSDELNASMEKAAMALDFERAAELRDQVALLRRV.

Belongs to the UvrC family. Interacts with UvrB in an incision complex.

It is found in the cytoplasm. Functionally, the UvrABC repair system catalyzes the recognition and processing of DNA lesions. UvrC both incises the 5' and 3' sides of the lesion. The N-terminal half is responsible for the 3' incision and the C-terminal half is responsible for the 5' incision. The protein is UvrABC system protein C of Pseudomonas syringae pv. tomato (strain ATCC BAA-871 / DC3000).